A 155-amino-acid chain; its full sequence is Aspartate carbamoyltransferase regulatory chain (155 aa).

Positions 112, 117, 140, and 143 each coordinate Zn(2+).

The protein belongs to the PyrI family. As to quaternary structure, contains catalytic and regulatory chains. It depends on Zn(2+) as a cofactor.

In terms of biological role, involved in allosteric regulation of aspartate carbamoyltransferase. The chain is Aspartate carbamoyltransferase regulatory chain from Phocaeicola vulgatus (strain ATCC 8482 / DSM 1447 / JCM 5826 / CCUG 4940 / NBRC 14291 / NCTC 11154) (Bacteroides vulgatus).